The following is a 602-amino-acid chain: Elongation factor 4 (602 aa).

The region spanning Lys-8–Ser-189 is the tr-type G domain. GTP is bound by residues Asp-20–Thr-25 and Asn-136–Asp-139.

This sequence belongs to the TRAFAC class translation factor GTPase superfamily. Classic translation factor GTPase family. LepA subfamily.

The protein resides in the cell inner membrane. It catalyses the reaction GTP + H2O = GDP + phosphate + H(+). Its function is as follows. Required for accurate and efficient protein synthesis under certain stress conditions. May act as a fidelity factor of the translation reaction, by catalyzing a one-codon backward translocation of tRNAs on improperly translocated ribosomes. Back-translocation proceeds from a post-translocation (POST) complex to a pre-translocation (PRE) complex, thus giving elongation factor G a second chance to translocate the tRNAs correctly. Binds to ribosomes in a GTP-dependent manner. This is Elongation factor 4 from Helicobacter pylori (strain G27).